Reading from the N-terminus, the 133-residue chain is IgW chain C region, secreted form 2 (133 aa).

Residues 1 to 71 form the Ig-like domain; that stretch reads VISGFYPDSV…TGSRFNDRIS (71 aa). 2 N-linked (GlcNAc...) asparagine glycosylation sites follow: asparagine 32 and asparagine 112. A secretory tail region spans residues 76–133; sequence KGGTVNLPVPGGNTPCTCPPSSCSGCMPKLVYQTDLNVTLENGGQLQYNCHQQACKIK.

Expressed mainly in lymphoid tissues including spleen, epigonal organ and circulating lymphocytes.

It is found in the secreted. This chain is IgW chain C region, secreted form 2, found in Heterodontus francisci (Horn shark).